We begin with the raw amino-acid sequence, 169 residues long: Transcription antitermination protein NusB (169 aa).

The disordered stretch occupies residues 1–20 (MAESSNKPFRGPVRANDRKA).

This sequence belongs to the NusB family.

Involved in transcription antitermination. Required for transcription of ribosomal RNA (rRNA) genes. Binds specifically to the boxA antiterminator sequence of the ribosomal RNA (rrn) operons. The chain is Transcription antitermination protein NusB from Bradyrhizobium sp. (strain BTAi1 / ATCC BAA-1182).